We begin with the raw amino-acid sequence, 101 residues long: Small ribosomal subunit protein uS10 (101 aa).

The protein belongs to the universal ribosomal protein uS10 family. As to quaternary structure, part of the 30S ribosomal subunit.

Involved in the binding of tRNA to the ribosomes. In Methanocaldococcus jannaschii (strain ATCC 43067 / DSM 2661 / JAL-1 / JCM 10045 / NBRC 100440) (Methanococcus jannaschii), this protein is Small ribosomal subunit protein uS10.